We begin with the raw amino-acid sequence, 430 residues long: Arrestin-related trafficking adapter 10 (430 aa).

The segment at 55–75 (AEADRHSSRLPQDPQTQYTKE) is disordered. The segment covering 63–72 (RLPQDPQTQY) has biased composition (polar residues).

The protein belongs to the ART10 family.

It is found in the cytoplasm. May regulate endocytosis by recruiting RSP5 ubiquitin ligase activity to specific plasma membrane proteins in response to extracellular stimuli. This Eremothecium gossypii (strain ATCC 10895 / CBS 109.51 / FGSC 9923 / NRRL Y-1056) (Yeast) protein is Arrestin-related trafficking adapter 10 (ART10).